The following is a 109-amino-acid chain: Nucleoid-associated protein BUsg_467 (109 aa).

The protein belongs to the YbaB/EbfC family. Homodimer.

The protein localises to the cytoplasm. It localises to the nucleoid. Functionally, binds to DNA and alters its conformation. May be involved in regulation of gene expression, nucleoid organization and DNA protection. The protein is Nucleoid-associated protein BUsg_467 of Buchnera aphidicola subsp. Schizaphis graminum (strain Sg).